The sequence spans 230 residues: Bidirectional sugar transporter SWEET2b (230 aa).

Topologically, residues Met1–Asp6 are extracellular. Residues Ile7–Pro27 form a helical membrane-spanning segment. The MtN3/slv 1 domain occupies Gly13–Arg98. Residues Val28–Gly45 lie on the Cytoplasmic side of the membrane. The helical transmembrane segment at Leu46–Val66 threads the bilayer. Residues Ala67–Leu72 are Extracellular-facing. The helical transmembrane segment at Val73–Phe93 threads the bilayer. Residues Tyr94 to Lys103 lie on the Cytoplasmic side of the membrane. A helical transmembrane segment spans residues Ile104–Phe124. Over Phe125–Ala137 the chain is Extracellular. The region spanning Gln133 to Lys217 is the MtN3/slv 2 domain. The chain crosses the membrane as a helical span at residues Val138–Ile158. The Cytoplasmic segment spans residues Arg159–Pro167. Residues Phe168 to Leu188 traverse the membrane as a helical segment. Over Arg189–Asp190 the chain is Extracellular. A helical membrane pass occupies residues Phe191 to Tyr211. The Cytoplasmic portion of the chain corresponds to Ala212–Ala230.

This sequence belongs to the SWEET sugar transporter family. Forms homooligomers and/or heterooligomers.

Its subcellular location is the cell membrane. Mediates both low-affinity uptake and efflux of sugar across the plasma membrane. This chain is Bidirectional sugar transporter SWEET2b (SWEET2B), found in Oryza sativa subsp. indica (Rice).